A 308-amino-acid chain; its full sequence is Putative gluconeogenesis factor (308 aa).

This sequence belongs to the gluconeogenesis factor family.

It localises to the cytoplasm. Required for morphogenesis under gluconeogenic growth conditions. This chain is Putative gluconeogenesis factor, found in Pasteurella multocida (strain Pm70).